The following is a 116-amino-acid chain: Spexin (116 aa).

The first 26 residues, Met-1–Ser-26, serve as a signal peptide directing secretion. The propeptide occupies Ala-27–Arg-35. Gln-49 is modified (glutamine amide). 2 propeptides span residues Gly-50 to Trp-116 and Pro-74 to Trp-116. Residues Phe-53–Ser-73 are compositionally biased toward basic and acidic residues. A disordered region spans residues Phe-53–Thr-80.

Belongs to the spexin family.

It localises to the secreted. The protein resides in the extracellular space. It is found in the cytoplasmic vesicle. Its subcellular location is the secretory vesicle. Functionally, plays a role as a central modulator of cardiovascular and renal function and nociception. Also plays a role in energy metabolism and storage. Inhibits adrenocortical cell proliferation with minor stimulation on corticosteroid release. Its function is as follows. Acts as a ligand for galanin receptors GALR2 and GALR3. Intracerebroventricular administration of the peptide induces an increase in arterial blood pressure, a decrease in both heart rate and renal excretion and delayed natriuresis. Intraventricular administration of the peptide induces antinociceptive activity. Also induces contraction of muscarinic-like stomach smooth muscles. Intraperitoneal administration of the peptide induces a reduction in food consumption and body weight. Inhibits long chain fatty acid uptake into adipocytes. Intracerebroventricular administration of the peptide induces a decrease in heart rate, but no change in arterial pressure, and an increase in urine flow rate. Intraventricular administration of the peptide induces antinociceptive activity. In Bos taurus (Bovine), this protein is Spexin (SPX).